Here is a 1202-residue protein sequence, read N- to C-terminus: DNA polymerase beta (1202 aa).

3 consecutive repeat copies span residues 1071 to 1074 (AGNP), 1075 to 1078 (AGNP), and 1079 to 1082 (AGNA). Residues 1071–1082 (AGNPAGNPAGNA) form a 3 X 4 AA tandem repeats of A-G-[NK]-[PA] region.

This sequence belongs to the DNA polymerase type-B family.

The catalysed reaction is DNA(n) + a 2'-deoxyribonucleoside 5'-triphosphate = DNA(n+1) + diphosphate. Functionally, DNA-directed DNA polymerase involved in viral DNA replication. The polypeptide is DNA polymerase beta (DPOL) (Ornithodoros (relapsing fever ticks)).